The primary structure comprises 263 residues: ATP synthase subunit b 2 (263 aa).

Residues 2-22 (LIDPLTVVAQIINFLILVALL) traverse the membrane as a helical segment.

This sequence belongs to the ATPase B chain family. As to quaternary structure, F-type ATPases have 2 components, F(1) - the catalytic core - and F(0) - the membrane proton channel. F(1) has five subunits: alpha(3), beta(3), gamma(1), delta(1), epsilon(1). F(0) has four main subunits: a(1), b(1), b'(1) and c(10-14). The alpha and beta chains form an alternating ring which encloses part of the gamma chain. F(1) is attached to F(0) by a central stalk formed by the gamma and epsilon chains, while a peripheral stalk is formed by the delta, b and b' chains.

It localises to the cellular thylakoid membrane. Functionally, f(1)F(0) ATP synthase produces ATP from ADP in the presence of a proton or sodium gradient. F-type ATPases consist of two structural domains, F(1) containing the extramembraneous catalytic core and F(0) containing the membrane proton channel, linked together by a central stalk and a peripheral stalk. During catalysis, ATP synthesis in the catalytic domain of F(1) is coupled via a rotary mechanism of the central stalk subunits to proton translocation. Component of the F(0) channel, it forms part of the peripheral stalk, linking F(1) to F(0). The polypeptide is ATP synthase subunit b 2 (Acaryochloris marina (strain MBIC 11017)).